A 232-amino-acid polypeptide reads, in one-letter code: Ribosomal RNA small subunit methyltransferase G (232 aa).

S-adenosyl-L-methionine-binding positions include glycine 93, leucine 98, 144-145 (VE), and arginine 163.

The protein belongs to the methyltransferase superfamily. RNA methyltransferase RsmG family.

The protein resides in the cytoplasm. The enzyme catalyses guanosine(527) in 16S rRNA + S-adenosyl-L-methionine = N(7)-methylguanosine(527) in 16S rRNA + S-adenosyl-L-homocysteine. Functionally, specifically methylates the N7 position of guanine in position 527 of 16S rRNA. The polypeptide is Ribosomal RNA small subunit methyltransferase G (Burkholderia pseudomallei (strain 1106a)).